The sequence spans 486 residues: MASMSLSFSSSLCSSRIPEGKRRFRHRDVGIVRCVLAASKSSPGSVTKKRLWKDGEFPGITEPVNQRRTPIKNVKKKLDRRSKANGWVNTVTETLSDLIAKKQWLQALEVFDMLREQTFYQPKEGTYMKLLVLLGKSGQPNRAQKLFDEMLEEGLEPTVELYTALLAAYTRSNLIDDAFSILDKMKSFPQCQPDVFTYSTLLKACVDASQFDLVDSLYKEMDERLITPNTVTQNIVLSGYGRVGRFDQMEKVLSDMLVSTACKPDVWTMNIILSVFGNMGKIDMMESWYEKFRNFGIEPETRTFNILIGSYGKKRMYDKMSSVMEYMRKLEFPWTTSTYNNIIEAFADVGDAKNMELTFDQMRSEGMKADTKTFCCLINGYANAGLFHKVISSVQLAAKFEIPENTAFYNAVISACAKADDLIEMERVYIRMKERQCVCDSRTFEIMVEAYEKEGMNDKIYYLEQERQKLMDRTVATKEMENLPAG.

The N-terminal 36 residues, 1–36 (MASMSLSFSSSLCSSRIPEGKRRFRHRDVGIVRCVL), are a transit peptide targeting the chloroplast. PPR repeat units follow at residues 123–157 (KEGT…GLEP), 158–188 (TVEL…MKSF), 194–228 (DVFT…LITP), 229–264 (NTVT…ACKP), 265–299 (DVWT…GIEP), 300–334 (ETRT…EFPW), 335–369 (TTST…GMKA), 370–404 (DTKT…EIPE), 405–439 (NTAF…QCVC), and 440–470 (DSRT…RQKL).

The protein belongs to the PPR family. P subfamily.

It is found in the plastid. It localises to the chloroplast. This is Pentatricopeptide repeat-containing protein At3g06430, chloroplastic (EMB2750) from Arabidopsis thaliana (Mouse-ear cress).